The following is a 187-amino-acid chain: Protein GrpE (187 aa).

The segment at 1–26 (MHDPKESLETNIQETESQEKLPETPI) is disordered.

It belongs to the GrpE family. In terms of assembly, homodimer.

The protein localises to the cytoplasm. Its function is as follows. Participates actively in the response to hyperosmotic and heat shock by preventing the aggregation of stress-denatured proteins, in association with DnaK and GrpE. It is the nucleotide exchange factor for DnaK and may function as a thermosensor. Unfolded proteins bind initially to DnaJ; upon interaction with the DnaJ-bound protein, DnaK hydrolyzes its bound ATP, resulting in the formation of a stable complex. GrpE releases ADP from DnaK; ATP binding to DnaK triggers the release of the substrate protein, thus completing the reaction cycle. Several rounds of ATP-dependent interactions between DnaJ, DnaK and GrpE are required for fully efficient folding. This is Protein GrpE from Dichelobacter nodosus (strain VCS1703A).